A 469-amino-acid polypeptide reads, in one-letter code: GTPase Der (469 aa).

2 consecutive EngA-type G domains span residues 3-166 (PVIA…PEDE) and 177-350 (LRLA…ESAN). Residues 9 to 16 (GRPNVGKS), 56 to 60 (DTGGI), 118 to 121 (NKVD), 183 to 190 (GRPNVGKS), 230 to 234 (DTAGV), and 295 to 298 (NKWD) each bind GTP. One can recognise a KH-like domain in the interval 351–435 (LKVSPAKLTQ…PVKIEFKTSE (85 aa)).

It belongs to the TRAFAC class TrmE-Era-EngA-EngB-Septin-like GTPase superfamily. EngA (Der) GTPase family. Associates with the 50S ribosomal subunit.

In terms of biological role, GTPase that plays an essential role in the late steps of ribosome biogenesis. This is GTPase Der from Acinetobacter baumannii (strain AB0057).